The primary structure comprises 155 residues: 2-C-methyl-D-erythritol 2,4-cyclodiphosphate synthase (155 aa).

Residues Asp-8 and His-10 each coordinate a divalent metal cation. Residues 8–10 (DVH) and 34–35 (HS) contribute to the 4-CDP-2-C-methyl-D-erythritol 2-phosphate site. His-42 is a binding site for a divalent metal cation. 4-CDP-2-C-methyl-D-erythritol 2-phosphate is bound by residues 56 to 58 (DIG), 61 to 65 (FPDSD), 132 to 135 (TTEE), Phe-139, and Arg-142.

Belongs to the IspF family. Homotrimer. The cofactor is a divalent metal cation.

The catalysed reaction is 4-CDP-2-C-methyl-D-erythritol 2-phosphate = 2-C-methyl-D-erythritol 2,4-cyclic diphosphate + CMP. It functions in the pathway isoprenoid biosynthesis; isopentenyl diphosphate biosynthesis via DXP pathway; isopentenyl diphosphate from 1-deoxy-D-xylulose 5-phosphate: step 4/6. In terms of biological role, involved in the biosynthesis of isopentenyl diphosphate (IPP) and dimethylallyl diphosphate (DMAPP), two major building blocks of isoprenoid compounds. Catalyzes the conversion of 4-diphosphocytidyl-2-C-methyl-D-erythritol 2-phosphate (CDP-ME2P) to 2-C-methyl-D-erythritol 2,4-cyclodiphosphate (ME-CPP) with a corresponding release of cytidine 5-monophosphate (CMP). The chain is 2-C-methyl-D-erythritol 2,4-cyclodiphosphate synthase from Clostridium acetobutylicum (strain ATCC 824 / DSM 792 / JCM 1419 / IAM 19013 / LMG 5710 / NBRC 13948 / NRRL B-527 / VKM B-1787 / 2291 / W).